The chain runs to 292 residues: Universal stress protein Mb2346c (292 aa).

This sequence belongs to the universal stress protein A family.

The protein is Universal stress protein Mb2346c of Mycobacterium bovis (strain ATCC BAA-935 / AF2122/97).